We begin with the raw amino-acid sequence, 95 residues long: Protein TusB (95 aa).

The protein belongs to the DsrH/TusB family. In terms of assembly, heterohexamer, formed by a dimer of trimers. The hexameric TusBCD complex contains 2 copies each of TusB, TusC and TusD. The TusBCD complex interacts with TusE.

The protein localises to the cytoplasm. Part of a sulfur-relay system required for 2-thiolation of 5-methylaminomethyl-2-thiouridine (mnm(5)s(2)U) at tRNA wobble positions. The protein is Protein TusB of Buchnera aphidicola subsp. Acyrthosiphon pisum (strain 5A).